The sequence spans 432 residues: Glial fibrillary acidic protein (432 aa).

Residues M1 to E72 are head. The residue at position 7 (T7) is a Phosphothreonine; by AURKB and ROCK1. At R12 the chain carries Omega-N-methylarginine. A Phosphoserine; by AURKB and ROCK1 modification is found at S13. A citrulline mark is found at R30 and R36. Position 38 is a phosphoserine; by AURKB and ROCK1 (S38). The IF rod domain occupies E69–I377. The tract at residues M73–L104 is coil 1A. At S82 the chain carries Phosphoserine. Residues R105–V115 form a linker 1 region. T110 and T150 each carry phosphothreonine. The coil 1B stretch occupies residues Y116 to Q214. The tract at residues L215–D230 is linker 12. The tract at residues L231–E252 is coil 2A. Residues A253 to W256 are linker 2. The interval Y257 to I377 is coil 2B. R270 bears the Citrulline mark. S323 is subject to Phosphoserine. The tail stretch occupies residues T378–M432. Position 383 is a phosphothreonine (T383). Residue S385 is modified to Phosphoserine. 2 positions are modified to citrulline: R406 and R416.

This sequence belongs to the intermediate filament family. Interacts with SYNM. Phosphorylated by PKN1.

It is found in the cytoplasm. In terms of biological role, GFAP, a class-III intermediate filament, is a cell-specific marker that, during the development of the central nervous system, distinguishes astrocytes from other glial cells. The sequence is that of Glial fibrillary acidic protein (GFAP) from Pongo abelii (Sumatran orangutan).